The primary structure comprises 185 residues: Ribosome-recycling factor (185 aa).

The protein belongs to the RRF family.

It localises to the cytoplasm. In terms of biological role, responsible for the release of ribosomes from messenger RNA at the termination of protein biosynthesis. May increase the efficiency of translation by recycling ribosomes from one round of translation to another. In Nitrosospira multiformis (strain ATCC 25196 / NCIMB 11849 / C 71), this protein is Ribosome-recycling factor.